We begin with the raw amino-acid sequence, 496 residues long: MPDVAVIPRPVLLETTDGPPFVLTAATILVVDSAPELVAVGVLAADLLGRLSGRPVEVRYTEGGAPSVVRLRLSEDLPAGDEAYRLVVSEHRVDIDARSAAGLVRAVVTLRQTVSSLGDGTLTVPALRVEDHPRYAWRGLSIDVARHFFTVDDLKAIIGLLAHYKLNVLHLHLTDDQGWRVHLPSRPHLTRASAGTSVGGGPGGFYNPAQLAEIVVARAARGIRVVPEIDVPGHVNAATHAYGDLTPSGEPTDVYTGIEVGFSRLHDDLPATRPFLRDVFTDLAAMTPGEYVHIGGDEVLTMDHDKYARLVGYAASVVRDAGKKVVGWQEISSTPLEPGTVVQYWDINADPAPFVAAAQAGAHVLMSPGSRAYLDMKYDATTELGLEWAGHIELRDAYDWEPSTLIPGVPPESVIGVEAAVWTETLTDLGELTSMLLPRLAAVAEVAWTAPQDRDWDDFSGRVAQHAPFWDRVGFRWHASPQVSWPGPGSAPGAAF.

The Proton donor role is filled by glutamate 298.

It belongs to the glycosyl hydrolase 20 family.

It carries out the reaction Hydrolysis of terminal non-reducing N-acetyl-D-hexosamine residues in N-acetyl-beta-D-hexosaminides.. Its pathway is glycan degradation; chitin degradation. In terms of biological role, catalyzes the cleavage of beta-N-acetylglucosaminides and beta-N-acetylgalactosaminides. Also catalyzes the hydrolysis of N-acetylchitooligomers. May be involved in chitin degradation. It is not able to cleave beta-glucosides. This Cellulomonas fimi protein is Beta-N-acetylhexosaminidase (hex20).